Consider the following 28-residue polypeptide: Omega-agatoxin-Aa2a (28 aa).

It belongs to the neurotoxin 04 (omega-agtx) family. 03 (type II/III omega-agtx) subfamily. Expressed by the venom gland.

It is found in the secreted. Functionally, omega-agatoxin are antagonist of voltage-gated calcium channels. They block insect neuromuscular transmission presynaptically. Potent blocker of N-type calcium channels (Cav2.2/CACNA1B). The sequence is that of Omega-agatoxin-Aa2a from Agelenopsis aperta (North American funnel-web spider).